We begin with the raw amino-acid sequence, 672 residues long: Bifunctional polymyxin resistance protein ArnA (672 aa).

The formyltransferase ArnAFT stretch occupies residues 1-310; sequence MKAIVFAYHD…EMGMVPQAKL (310 aa). The active-site Proton donor; for formyltransferase activity is the histidine 104. Residues arginine 114 and 136 to 140 each bind (6R)-10-formyltetrahydrofolate; that span reads VSRAD. The segment at 320–672 is dehydrogenase ArnADH; the sequence is RRTRVLILGV…HADNVTDTQG (353 aa). NAD(+) contacts are provided by residues aspartate 353 and 374–375; that span reads DI. UDP-alpha-D-glucuronate is bound by residues alanine 399, tyrosine 404, and 438 to 439; that span reads TS. The active-site Proton acceptor; for decarboxylase activity is the glutamate 440. Residues arginine 466, asparagine 498, 532 to 541, and tyrosine 619 each bind UDP-alpha-D-glucuronate; that span reads KLVDGGAQKR. Arginine 625 functions as the Proton donor; for decarboxylase activity in the catalytic mechanism.

In the N-terminal section; belongs to the Fmt family. UDP-L-Ara4N formyltransferase subfamily. It in the C-terminal section; belongs to the NAD(P)-dependent epimerase/dehydratase family. UDP-glucuronic acid decarboxylase subfamily. Homohexamer, formed by a dimer of trimers.

The catalysed reaction is UDP-alpha-D-glucuronate + NAD(+) = UDP-beta-L-threo-pentopyranos-4-ulose + CO2 + NADH. It carries out the reaction UDP-4-amino-4-deoxy-beta-L-arabinose + (6R)-10-formyltetrahydrofolate = UDP-4-deoxy-4-formamido-beta-L-arabinose + (6S)-5,6,7,8-tetrahydrofolate + H(+). Its pathway is nucleotide-sugar biosynthesis; UDP-4-deoxy-4-formamido-beta-L-arabinose biosynthesis; UDP-4-deoxy-4-formamido-beta-L-arabinose from UDP-alpha-D-glucuronate: step 1/3. It participates in nucleotide-sugar biosynthesis; UDP-4-deoxy-4-formamido-beta-L-arabinose biosynthesis; UDP-4-deoxy-4-formamido-beta-L-arabinose from UDP-alpha-D-glucuronate: step 3/3. The protein operates within bacterial outer membrane biogenesis; lipopolysaccharide biosynthesis. In terms of biological role, bifunctional enzyme that catalyzes the oxidative decarboxylation of UDP-glucuronic acid (UDP-GlcUA) to UDP-4-keto-arabinose (UDP-Ara4O) and the addition of a formyl group to UDP-4-amino-4-deoxy-L-arabinose (UDP-L-Ara4N) to form UDP-L-4-formamido-arabinose (UDP-L-Ara4FN). The modified arabinose is attached to lipid A and is required for resistance to polymyxin and cationic antimicrobial peptides. The polypeptide is Bifunctional polymyxin resistance protein ArnA (Pectobacterium carotovorum subsp. carotovorum (strain PC1)).